We begin with the raw amino-acid sequence, 227 residues long: Large ribosomal subunit protein uL1 (227 aa).

Belongs to the universal ribosomal protein uL1 family. In terms of assembly, part of the 50S ribosomal subunit.

Its function is as follows. Binds directly to 23S rRNA. The L1 stalk is quite mobile in the ribosome, and is involved in E site tRNA release. In terms of biological role, protein L1 is also a translational repressor protein, it controls the translation of the L11 operon by binding to its mRNA. The chain is Large ribosomal subunit protein uL1 from Mesoplasma florum (strain ATCC 33453 / NBRC 100688 / NCTC 11704 / L1) (Acholeplasma florum).